Here is a 29-residue protein sequence, read N- to C-terminus: GKPICGETCFKGKCYTPGCTCSYPICKKD.

Residues 1-29 (GKPICGETCFKGKCYTPGCTCSYPICKKD) constitute a cross-link (cyclopeptide (Gly-Asp)). 3 disulfides stabilise this stretch: Cys-5-Cys-19, Cys-9-Cys-21, and Cys-14-Cys-26.

In terms of processing, this is a cyclic peptide. Contains 3 disulfide bonds.

Probably participates in a plant defense mechanism (Potential). Binds to and induces leakage in phospholipd membranes, particularly ones containing 1-palmitoyl-2-oleophosphatidylethanolamine (POPE). In vitro, displays cytotoxicity against cultured cells. Not active against Gram-negative bacterium E.coli ATCC 25922 or Gram-positive bacterium S.aureus ATCC 25923 up to a concentration of 64 uM. This Melicytus latifolius (Norfolk Island mahoe) protein is Cyclotide mela-3.